The following is a 159-amino-acid chain: Eukaryotic translation initiation factor 5A-2 (159 aa).

Over residues 1 to 12 (MSDEEHQFESKA) the composition is skewed to basic and acidic residues. The tract at residues 1-23 (MSDEEHQFESKADAGASKTYPQQ) is disordered. K52 is modified (hypusine).

It belongs to the eIF-5A family. In terms of processing, lys-52 undergoes hypusination, a unique post-translational modification that consists in the addition of a butylamino group from spermidine to lysine side chain, leading to the formation of the unusual amino acid hypusine. eIF-5As are the only known proteins to undergo this modification, which is essential for their function.

Its function is as follows. Translation factor that promotes translation elongation and termination, particularly upon ribosome stalling at specific amino acid sequence contexts. Binds between the exit (E) and peptidyl (P) site of the ribosome and promotes rescue of stalled ribosome: specifically required for efficient translation of polyproline-containing peptides as well as other motifs that stall the ribosome. Acts as a ribosome quality control (RQC) cofactor by joining the RQC complex to facilitate peptidyl transfer during CAT tailing step. The sequence is that of Eukaryotic translation initiation factor 5A-2 (EIF-5A2) from Nicotiana plumbaginifolia (Leadwort-leaved tobacco).